Here is a 255-residue protein sequence, read N- to C-terminus: Sorbose reductase sou1 (255 aa).

2 residues coordinate NADP(+): I21 and N95. Catalysis depends on proton donor residues S148 and Y163. 4 residues coordinate NADP(+): Y163, K167, I195, and T197. The active-site Lowers pKa of active site Tyr is the K167.

This sequence belongs to the short-chain dehydrogenases/reductases (SDR) family.

The enzyme catalyses D-sorbitol + NADP(+) = keto-L-sorbose + NADPH + H(+). In terms of biological role, catalyzes the NADP dependent reduction of L-sorbose to D-glucitol. The polypeptide is Sorbose reductase sou1 (sou1) (Schizosaccharomyces pombe (strain 972 / ATCC 24843) (Fission yeast)).